The sequence spans 423 residues: Mannose-6-phosphate isomerase (423 aa).

Ala-2 bears the N-acetylalanine mark. Residues Ser-102 and Ser-108 each carry the phosphoserine modification. Zn(2+)-binding residues include Gln-110, His-112, Glu-137, and His-276. Residue Arg-295 is part of the active site.

It belongs to the mannose-6-phosphate isomerase type 1 family. Zn(2+) serves as cofactor. In terms of tissue distribution, expressed in all tissues, but more abundant in testis.

It is found in the cytoplasm. The enzyme catalyses D-mannose 6-phosphate = D-fructose 6-phosphate. The protein operates within nucleotide-sugar biosynthesis; GDP-alpha-D-mannose biosynthesis; alpha-D-mannose 1-phosphate from D-fructose 6-phosphate: step 1/2. Isomerase that catalyzes the interconversion of fructose-6-P and mannose-6-P and has a critical role in the supply of D-mannose derivatives required for many eukaryotic glycosylation reactions. This is Mannose-6-phosphate isomerase from Mus musculus (Mouse).